The sequence spans 797 residues: MAP/microtubule affinity-regulating kinase 3 (797 aa).

The segment at methionine 1–serine 35 is disordered. Residues asparagine 11 to valine 28 show a composition bias toward basic and acidic residues. A Phosphoserine modification is found at serine 42. The Protein kinase domain maps to tyrosine 56–isoleucine 307. ATP is bound by residues isoleucine 62 to valine 70 and lysine 85. Aspartate 178 serves as the catalytic Proton acceptor. A Phosphothreonine; by LKB1 modification is found at threonine 211. The UBA domain maps to isoleucine 326–glycine 365. Phosphoserine occurs at positions 368, 374, 376, 380, 383, 400, 419, and 469. Disordered stretches follow at residues aspartate 372 to arginine 504 and proline 585 to serine 701. Residues serine 374–alanine 385 show a composition bias toward low complexity. Over residues serine 391–serine 400 the composition is skewed to polar residues. Polar residues-rich tracts occupy residues valine 492–arginine 504 and proline 585–threonine 602. Serine 593 and serine 596 each carry phosphoserine. Threonine 602 carries the phosphothreonine modification. Position 617 is a phosphothreonine; by PKC/PRKCZ (threonine 617). Phosphoserine is present on residues serine 636, serine 651, and serine 654. The span at proline 637–lysine 664 shows a compositional bias: polar residues. The span at leucine 669–arginine 678 shows a compositional bias: basic and acidic residues. Position 687 is a phosphoserine (serine 687). The span at glutamate 689–proline 699 shows a compositional bias: basic and acidic residues. One can recognise a KA1 domain in the interval aspartate 748–leucine 797.

This sequence belongs to the protein kinase superfamily. CAMK Ser/Thr protein kinase family. SNF1 subfamily. As to quaternary structure, interacts with MAPT/TAU. Interacts with DLG5 (via coiled-coil domain). Interacts with STK3/MST2 and STK4/MST1 in the presence of DLG5. Interacts with YWHAB, YWHAG, YWHAQ and YWHAZ. Interacts with PKP2 (via N-terminus). Interacts with CDC25C. Interacts with KSR1. Phosphorylated at Thr-211 by STK11/LKB1 in complex with STE20-related adapter-alpha (STRADA) pseudo kinase and CAB39. Phosphorylation at Thr-617 by PRKCZ/aPKC inhibits the kinase activity.

The protein localises to the cell membrane. It localises to the cell projection. Its subcellular location is the dendrite. It is found in the cytoplasm. It catalyses the reaction L-seryl-[protein] + ATP = O-phospho-L-seryl-[protein] + ADP + H(+). It carries out the reaction L-threonyl-[protein] + ATP = O-phospho-L-threonyl-[protein] + ADP + H(+). With respect to regulation, activated by phosphorylation on Thr-211. Inhibited by phosphorylation on Thr-617. Serine/threonine-protein kinase. Involved in the specific phosphorylation of microtubule-associated proteins for MAP2 and MAP4. Phosphorylates the microtubule-associated protein MAPT/TAU. Phosphorylates CDC25C on 'Ser-216'. Regulates localization and activity of some histone deacetylases by mediating phosphorylation of HDAC7, promoting subsequent interaction between HDAC7 and 14-3-3 and export from the nucleus. Regulates localization and activity of MITF by mediating its phosphorylation, promoting subsequent interaction between MITF and 14-3-3 and retention in the cytosol. Negatively regulates the Hippo signaling pathway and antagonizes the phosphorylation of LATS1. Cooperates with DLG5 to inhibit the kinase activity of STK3/MST2 toward LATS1. Phosphorylates PKP2 and KSR1. In Rattus norvegicus (Rat), this protein is MAP/microtubule affinity-regulating kinase 3 (Mark3).